The primary structure comprises 413 residues: Probable tRNA sulfurtransferase (413 aa).

The THUMP domain maps to 61 to 171 (TRVLDRVTRV…EDGTYIFTEK (111 aa)). ATP contacts are provided by residues 189–190 (ML), 214–215 (HF), Arg275, Gly297, and Gln306.

The protein belongs to the ThiI family.

Its subcellular location is the cytoplasm. It carries out the reaction [ThiI sulfur-carrier protein]-S-sulfanyl-L-cysteine + a uridine in tRNA + 2 reduced [2Fe-2S]-[ferredoxin] + ATP + H(+) = [ThiI sulfur-carrier protein]-L-cysteine + a 4-thiouridine in tRNA + 2 oxidized [2Fe-2S]-[ferredoxin] + AMP + diphosphate. It catalyses the reaction [ThiS sulfur-carrier protein]-C-terminal Gly-Gly-AMP + S-sulfanyl-L-cysteinyl-[cysteine desulfurase] + AH2 = [ThiS sulfur-carrier protein]-C-terminal-Gly-aminoethanethioate + L-cysteinyl-[cysteine desulfurase] + A + AMP + 2 H(+). The protein operates within cofactor biosynthesis; thiamine diphosphate biosynthesis. In terms of biological role, catalyzes the ATP-dependent transfer of a sulfur to tRNA to produce 4-thiouridine in position 8 of tRNAs, which functions as a near-UV photosensor. Also catalyzes the transfer of sulfur to the sulfur carrier protein ThiS, forming ThiS-thiocarboxylate. This is a step in the synthesis of thiazole, in the thiamine biosynthesis pathway. The sulfur is donated as persulfide by IscS. The protein is Probable tRNA sulfurtransferase of Natranaerobius thermophilus (strain ATCC BAA-1301 / DSM 18059 / JW/NM-WN-LF).